A 449-amino-acid chain; its full sequence is Hyaluronidase (449 aa).

An N-terminal signal peptide occupies residues 1–23 (MYHLWIKCLAAWIFLKRFNGVHV). 2 disulfide bridges follow: Cys47–Cys340 and Cys211–Cys227. Residues Asn67, Asn103, and Asn111 are each glycosylated (N-linked (GlcNAc...) asparagine). The active-site Proton donor is Glu135. Asn153 is a glycosylation site (N-linked (GlcNAc...) asparagine). N-linked (GlcNAc...) asparagine glycosylation is present at Asn357. 3 cysteine pairs are disulfide-bonded: Cys365–Cys376, Cys370–Cys427, and Cys429–Cys438. The N-linked (GlcNAc...) asparagine glycan is linked to Asn401. The region spanning 427–438 (CQCYQGWKGLYC) is the EGF-like domain.

The protein belongs to the glycosyl hydrolase 56 family. In terms of assembly, monomer. As to expression, expressed by the venom gland.

Its subcellular location is the secreted. The enzyme catalyses Random hydrolysis of (1-&gt;4)-linkages between N-acetyl-beta-D-glucosamine and D-glucuronate residues in hyaluronate.. In terms of biological role, snake venom endo-hyaluronidase that degrades hyaluronan to smaller oligosaccharide fragments. In venom, it is not toxic by itself, but increases the diffusion of other venom proteins by degrading the extracellular matrix. In addition, it displays antiedematogenic activity. This Crotalus adamanteus (Eastern diamondback rattlesnake) protein is Hyaluronidase.